We begin with the raw amino-acid sequence, 264 residues long: Tryptophan synthase alpha chain (264 aa).

Residues glutamate 49 and aspartate 60 each act as proton acceptor in the active site.

It belongs to the TrpA family. In terms of assembly, tetramer of two alpha and two beta chains.

It carries out the reaction (1S,2R)-1-C-(indol-3-yl)glycerol 3-phosphate + L-serine = D-glyceraldehyde 3-phosphate + L-tryptophan + H2O. It participates in amino-acid biosynthesis; L-tryptophan biosynthesis; L-tryptophan from chorismate: step 5/5. Its function is as follows. The alpha subunit is responsible for the aldol cleavage of indoleglycerol phosphate to indole and glyceraldehyde 3-phosphate. The sequence is that of Tryptophan synthase alpha chain from Lachnospira eligens (strain ATCC 27750 / DSM 3376 / VPI C15-48 / C15-B4) (Eubacterium eligens).